The chain runs to 292 residues: 33 kDa chaperonin (292 aa).

2 disulfide bridges follow: Cys-229/Cys-231 and Cys-262/Cys-265.

Belongs to the HSP33 family. Post-translationally, under oxidizing conditions two disulfide bonds are formed involving the reactive cysteines. Under reducing conditions zinc is bound to the reactive cysteines and the protein is inactive.

Its subcellular location is the cytoplasm. Functionally, redox regulated molecular chaperone. Protects both thermally unfolding and oxidatively damaged proteins from irreversible aggregation. Plays an important role in the bacterial defense system toward oxidative stress. This is 33 kDa chaperonin from Photobacterium profundum (strain SS9).